A 405-amino-acid polypeptide reads, in one-letter code: Aurora kinase A (405 aa).

Polar residues-rich tracts occupy residues valine 32–alanine 82 and arginine 91–asparagine 110. A disordered region spans residues valine 32–arginine 127. 2 positions are modified to phosphoserine: serine 42 and serine 52. Basic and acidic residues predominate over residues serine 111–arginine 127. A Protein kinase domain is found at phenylalanine 134–isoleucine 384. Residues lysine 144, lysine 163, and glutamate 212–alanine 214 contribute to the ATP site. Residue aspartate 257 is the Proton acceptor of the active site. A Glycyl lysine isopeptide (Lys-Gly) (interchain with G-Cter in SUMO2) cross-link involves residue lysine 259. ATP is bound by residues glutamate 261–asparagine 262 and aspartate 275. Positions histidine 281–leucine 294 are activation segment. Residues threonine 288 and threonine 289 each carry the phosphothreonine modification. Residue serine 343 is modified to Phosphoserine. Residues methionine 385 to serine 405 are disordered. Over residues lysine 396 to serine 405 the composition is skewed to basic and acidic residues.

This sequence belongs to the protein kinase superfamily. Ser/Thr protein kinase family. Aurora subfamily. In terms of assembly, part of a complex composed of NEDD9, AURKA and CTTN; within the complex NEDD9 acts as a scaffold protein and is required for complex formation. Identified in a complex with AUNIP and NIN. Interacts with FBXL7. Interacts with CPEB1, JTB, TACC1, TPX2, PPP2CA, as well as with the protein phosphatase type 1 (PP1) isoforms PPP1CA, PPP1CB and PPP1CC. Also interacts with its substrates ARHGEF2, BORA, KIF2A, PARD3, and p53/TP53. Interaction with BORA promotes phosphorylation of PLK1. Interacts with CIMAP3. Interacts with GADD45A, competing with its oligomerization. Interacts (via C-terminus) with AUNIP (via C-terminus). Interacts with FRY; this interaction facilitates AURKA-mediated PLK1 phosphorylation. Interacts with SIRT2. Interacts with MYCN; interaction is phospho-independent and triggers AURKA activation; AURKA competes with FBXW7 for binding to unphosphorylated MYCN but not for binding to phosphorylated MYCN. Interacts with HNRNPU. Interacts with AAAS. Interacts with KLHL18 and CUL3. Interacts with FOXP1. Interacts with HDAC6; AURKA-mediated phosphorylation of HDAC6 promotes deacetylation of alpha-tubulin. Post-translationally, activated by phosphorylation at Thr-289; this brings about a change in the conformation of the activation segment. Phosphorylation at Thr-289 varies during the cell cycle and is highest during M phase. Autophosphorylated at Thr-289 upon TPX2 binding. Thr-289 can be phosphorylated by several kinases, including PAK and PKA. Protein phosphatase type 1 (PP1) binds AURKA and inhibits its activity by dephosphorylating Thr-289 during mitosis. Phosphorylation at Ser-343 decreases the kinase activity. PPP2CA controls degradation by dephosphorylating Ser-52 at the end of mitosis. Ubiquitinated by the E3 ubiquitin-protein ligase complex SCF(FBXL7) during mitosis, leading to its degradation by the proteasome. Ubiquitinated by CHFR, leading to its degradation by the proteasome. Ubiquitinated by the anaphase-promoting complex (APC), leading to its degradation by the proteasome. Ubiquitinated by the CUL3-KLHL18 ligase leading to its activation at the centrosome which is required for initiating mitotic entry. Ubiquitination mediated by CUL3-KLHL18 ligase does not lead to its degradation by the proteasome.

The protein localises to the cytoplasm. It is found in the cytoskeleton. It localises to the microtubule organizing center. Its subcellular location is the centrosome. The protein resides in the spindle pole. The protein localises to the centriole. It is found in the cell projection. It localises to the neuron projection. Its subcellular location is the cilium. The protein resides in the cilium basal body. The protein localises to the basolateral cell membrane. The catalysed reaction is L-seryl-[protein] + ATP = O-phospho-L-seryl-[protein] + ADP + H(+). It carries out the reaction L-threonyl-[protein] + ATP = O-phospho-L-threonyl-[protein] + ADP + H(+). Activation of CDK1, appears to be an upstream event of AURKA activation. Phosphatase inhibitor-2 (PPP1R2) and TPX2 act also as activators. Inactivated by the G2 checkpoint. Inhibited by GADD45A and p53/TP53, and through dephosphorylation by protein phosphatase type 1 (PP1). MLN8054 is also a potent and selective inhibitor. Activated during the early phase of cilia disassembly in the presence of CIMAP3. Inhibited by the small molecule inhibitor VX-680. In terms of biological role, mitotic serine/threonine kinase that contributes to the regulation of cell cycle progression. Associates with the centrosome and the spindle microtubules during mitosis and plays a critical role in various mitotic events including the establishment of mitotic spindle, centrosome duplication, centrosome separation as well as maturation, chromosomal alignment, spindle assembly checkpoint, and cytokinesis. Required for normal spindle positioning during mitosis and for the localization of NUMA1 and DCTN1 to the cell cortex during metaphase. Required for initial activation of CDK1 at centrosomes. Phosphorylates numerous target proteins, including ARHGEF2, BORA, BRCA1, CDC25B, DLGP5, HDAC6, KIF2A, LATS2, NDEL1, PARD3, PPP1R2, PLK1, RASSF1, TACC3, p53/TP53 and TPX2. Phosphorylates MCRS1 which is required for MCRS1-mediated kinetochore fiber assembly and mitotic progression. Regulates KIF2A tubulin depolymerase activity. Important for microtubule formation and/or stabilization. Required for normal axon formation. Plays a role in microtubule remodeling during neurite extension. Also acts as a key regulatory component of the p53/TP53 pathway, and particularly the checkpoint-response pathways critical for oncogenic transformation of cells, by phosphorylating and destabilizing p53/TP53. Phosphorylates its own inhibitors, the protein phosphatase type 1 (PP1) isoforms, to inhibit their activity. Inhibits cilia outgrowth. Required for cilia disassembly via phosphorylation of HDAC6 and subsequent deacetylation of alpha-tubulin. Regulates protein levels of the anti-apoptosis protein BIRC5 by suppressing the expression of the SCF(FBXL7) E3 ubiquitin-protein ligase substrate adapter FBXL7 through the phosphorylation of the transcription factor FOXP1. In Canis lupus familiaris (Dog), this protein is Aurora kinase A.